The chain runs to 483 residues: 6-phosphogluconate dehydrogenase, decarboxylating (483 aa).

Residues 10–15 (GLAVMG) and 33–35 (NRT) contribute to the NADP(+) site. Lys38 carries the N6-acetyllysine modification. The residue at position 57 (Ser57) is a Phosphoserine. Lys59 is subject to N6-acetyllysine. NADP(+) contacts are provided by residues 75 to 77 (VKA) and Asn103. Substrate is bound by residues Asn103 and 129–131 (SGG). Ser129 carries the phosphoserine modification. The active-site Proton acceptor is the Lys184. 187-188 (HN) provides a ligand contact to substrate. The active-site Proton donor is Glu191. Substrate-binding residues include Tyr192, Lys261, Arg288, Arg447, and His453. 478–481 (SSSY) contacts NADP(+).

It belongs to the 6-phosphogluconate dehydrogenase family. Homodimer.

The protein localises to the cytoplasm. It carries out the reaction 6-phospho-D-gluconate + NADP(+) = D-ribulose 5-phosphate + CO2 + NADPH. It functions in the pathway carbohydrate degradation; pentose phosphate pathway; D-ribulose 5-phosphate from D-glucose 6-phosphate (oxidative stage): step 3/3. In terms of biological role, catalyzes the oxidative decarboxylation of 6-phosphogluconate to ribulose 5-phosphate and CO(2), with concomitant reduction of NADP to NADPH. This Mus musculus (Mouse) protein is 6-phosphogluconate dehydrogenase, decarboxylating (Pgd).